We begin with the raw amino-acid sequence, 368 residues long: snRNA-activating protein complex subunit 1 (368 aa).

The tract at residues 1 to 168 (MGTPPGLQTD…EEFKDPSDRV (168 aa)) is SNAPC3-binding. Residues 164 to 268 (PSDRVMKLIT…AESLAKIKSK (105 aa)) form an SNAPC4-binding region. Disordered stretches follow at residues 224–257 (QQWH…ERCE) and 275–368 (QASK…RRKH). Positions 238-257 (KTNDGEEKMEGNSQETERCE) are enriched in basic and acidic residues. A phosphoserine mark is found at Ser-289 and Ser-290.

Part of the SNAPc complex composed of 5 subunits: SNAPC1, SNAPC2, SNAPC3, SNAPC4 and SNAPC5. SNAPC1 interacts with SNAPC3, SNAPC4 and TBP.

The protein localises to the nucleus. Part of the SNAPc complex required for the transcription of both RNA polymerase II and III small-nuclear RNA genes. Binds to the proximal sequence element (PSE), a non-TATA-box basal promoter element common to these 2 types of genes. Recruits TBP and BRF2 to the U6 snRNA TATA box. The polypeptide is snRNA-activating protein complex subunit 1 (SNAPC1) (Homo sapiens (Human)).